The primary structure comprises 601 residues: Proline--tRNA ligase (601 aa).

Belongs to the class-II aminoacyl-tRNA synthetase family. ProS type 1 subfamily. Homodimer.

The protein resides in the cytoplasm. It catalyses the reaction tRNA(Pro) + L-proline + ATP = L-prolyl-tRNA(Pro) + AMP + diphosphate. Catalyzes the attachment of proline to tRNA(Pro) in a two-step reaction: proline is first activated by ATP to form Pro-AMP and then transferred to the acceptor end of tRNA(Pro). As ProRS can inadvertently accommodate and process non-cognate amino acids such as alanine and cysteine, to avoid such errors it has two additional distinct editing activities against alanine. One activity is designated as 'pretransfer' editing and involves the tRNA(Pro)-independent hydrolysis of activated Ala-AMP. The other activity is designated 'posttransfer' editing and involves deacylation of mischarged Ala-tRNA(Pro). The misacylated Cys-tRNA(Pro) is not edited by ProRS. This Trichodesmium erythraeum (strain IMS101) protein is Proline--tRNA ligase.